Consider the following 508-residue polypeptide: Maturase K (508 aa).

The protein belongs to the intron maturase 2 family. MatK subfamily.

The protein localises to the plastid. The protein resides in the chloroplast. In terms of biological role, usually encoded in the trnK tRNA gene intron. Probably assists in splicing its own and other chloroplast group II introns. This Pelargonium hortorum (Common geranium) protein is Maturase K.